A 265-amino-acid polypeptide reads, in one-letter code: MVPRDRVNAAAAGGGGEGRLVQSGIVNKKCDKKAPKRIHKSEREKLKRDKQNDLFNELGNLLEPDRQNNGKACVLGETTRILKDLLSQVESLRKENSSLKNESHYVALERNELHDDNSMLRTEILELQNELRTRMEGNPVWSHVNTRPALRVPYPTTGVFPVQHLPHLPVTTTAAFPQQLPVIIEQHYAATPRELQLFPESATSEDSEPSQEHGISDHVTRPQPRYPTPTATLPVNLFPVFPGRQDQQCSSGTSGTNEEDRIGRS.

The segment at 1-26 (MVPRDRVNAAAAGGGGEGRLVQSGIV) is disordered. A basic motif; degenerate region spans residues 35–48 (PKRIHKSEREKLKR). Residues 35–85 (PKRIHKSEREKLKRDKQNDLFNELGNLLEPDRQNNGKACVLGETTRILKDL) enclose the bHLH domain. The helix-loop-helix motif stretch occupies residues 49-85 (DKQNDLFNELGNLLEPDRQNNGKACVLGETTRILKDL). Residues 75–130 (LGETTRILKDLLSQVESLRKENSSLKNESHYVALERNELHDDNSMLRTEILELQNE) are a coiled coil. Residues 200–265 (ESATSEDSEP…TNEEDRIGRS (66 aa)) are disordered. Basic and acidic residues predominate over residues 210–220 (SQEHGISDHVT). A compositionally biased stretch (polar residues) spans 245–256 (QDQQCSSGTSGT).

It belongs to the bHLH protein family. As to quaternary structure, interacts with TIFY11A/JAZ9.

The protein localises to the nucleus. Its function is as follows. Transcription factor that plays a positive role in salt stress tolerance. Interacts with TIFY11A/JAZ9 and binds to the promoter of some potassium ion transporter genes to regulate potassium homeostasis during salt stress. In Oryza sativa subsp. japonica (Rice), this protein is Transcription factor BHLH062.